The primary structure comprises 262 residues: uncharacterized protein (262 aa).

A helical membrane pass occupies residues 13 to 35 (VVGALLTVVVIVTAAGIIYVISH).

It localises to the membrane. This is an uncharacterized protein from Archaeoglobus fulgidus (strain ATCC 49558 / DSM 4304 / JCM 9628 / NBRC 100126 / VC-16).